Consider the following 158-residue polypeptide: Endoribonuclease YbeY (158 aa).

Zn(2+) is bound by residues H124, H128, and H134.

The protein belongs to the endoribonuclease YbeY family. Zn(2+) serves as cofactor.

It is found in the cytoplasm. Single strand-specific metallo-endoribonuclease involved in late-stage 70S ribosome quality control and in maturation of the 3' terminus of the 16S rRNA. This Latilactobacillus sakei subsp. sakei (strain 23K) (Lactobacillus sakei subsp. sakei) protein is Endoribonuclease YbeY.